We begin with the raw amino-acid sequence, 357 residues long: Probable leucine aminopeptidase MCYG_04170 (357 aa).

An N-terminal signal peptide occupies residues 1-15 (MKVLAALALSALALA). Asn76 carries N-linked (GlcNAc...) asparagine glycosylation. Zn(2+)-binding residues include His167 and Asp185. N-linked (GlcNAc...) asparagine glycosylation occurs at Asn186. Zn(2+) is bound by residues Glu224 and Asp251. A disulfide bond links Cys291 and Cys295. Residue His324 participates in Zn(2+) binding.

The protein belongs to the peptidase M28 family. M28E subfamily. In terms of assembly, monomer. The cofactor is Zn(2+).

The protein localises to the secreted. Its function is as follows. Probable extracellular aminopeptidase which contributes to pathogenicity. This Arthroderma otae (strain ATCC MYA-4605 / CBS 113480) (Microsporum canis) protein is Probable leucine aminopeptidase MCYG_04170.